Here is a 316-residue protein sequence, read N- to C-terminus: Solute carrier family 25 member 32 (316 aa).

Solcar repeat units lie at residues H20 to Y109, L118 to K209, and L222 to F306. Transmembrane regions (helical) follow at residues L26–V46, V89–I106, Y123–V143, G185–Y203, Y227–Y243, and G281–Y300.

Belongs to the mitochondrial carrier (TC 2.A.29) family.

The protein resides in the mitochondrion inner membrane. The enzyme catalyses FAD(in) = FAD(out). In terms of biological role, facilitates flavin adenine dinucleotide (FAD) translocation across the mitochondrial inner membrane into the mitochondrial matrix where it acts as a redox cofactor to assist flavoenzyme activities in fundamental metabolic processes including fatty acid beta-oxidation, amino acid and choline metabolism as well as mitochondrial electron transportation. In particular, provides FAD to DLD dehydrogenase of the glycine cleavage system, part of mitochondrial one-carbon metabolic pathway involved in neural tube closure in early embryogenesis. This chain is Solute carrier family 25 member 32, found in Mus musculus (Mouse).